Here is a 236-residue protein sequence, read N- to C-terminus: Small ribosomal subunit protein uS2c (236 aa).

This sequence belongs to the universal ribosomal protein uS2 family.

It is found in the plastid. The protein localises to the chloroplast. The sequence is that of Small ribosomal subunit protein uS2c (rps2) from Calycanthus floridus var. glaucus (Eastern sweetshrub).